The sequence spans 226 residues: UPF0173 metal-dependent hydrolase Minf_0129 (226 aa).

The protein belongs to the UPF0173 family.

This chain is UPF0173 metal-dependent hydrolase Minf_0129, found in Methylacidiphilum infernorum (isolate V4) (Methylokorus infernorum (strain V4)).